Consider the following 129-residue polypeptide: D-ribose pyranase (129 aa).

H20 serves as the catalytic Proton donor. Residues D28, H96, and 118–120 (YAN) each bind substrate.

It belongs to the RbsD / FucU family. RbsD subfamily. In terms of assembly, homodecamer.

Its subcellular location is the cytoplasm. It carries out the reaction beta-D-ribopyranose = beta-D-ribofuranose. It functions in the pathway carbohydrate metabolism; D-ribose degradation; D-ribose 5-phosphate from beta-D-ribopyranose: step 1/2. Its function is as follows. Catalyzes the interconversion of beta-pyran and beta-furan forms of D-ribose. In Exiguobacterium sibiricum (strain DSM 17290 / CCUG 55495 / CIP 109462 / JCM 13490 / 255-15), this protein is D-ribose pyranase.